The primary structure comprises 375 residues: 2-oxoglutarate synthase subunit KorA (375 aa).

As to quaternary structure, heterotetramer of the KorA, KorB, KorC and KorD subunits.

It catalyses the reaction 2 oxidized [2Fe-2S]-[ferredoxin] + 2-oxoglutarate + CoA = succinyl-CoA + 2 reduced [2Fe-2S]-[ferredoxin] + CO2 + H(+). The chain is 2-oxoglutarate synthase subunit KorA (korA) from Methanothermobacter marburgensis (strain ATCC BAA-927 / DSM 2133 / JCM 14651 / NBRC 100331 / OCM 82 / Marburg) (Methanobacterium thermoautotrophicum).